A 375-amino-acid chain; its full sequence is Ubl carboxyl-terminal hydrolase 18 (375 aa).

The segment at 18–45 (ESPQSPADLEEKKEEDSNMKREQPRERP) is disordered. Over residues 26-45 (LEEKKEEDSNMKREQPRERP) the composition is skewed to basic and acidic residues. A USP domain is found at 55–373 (VGLHNIGQTC…TAYLLVYMKM (319 aa)). C64 serves as the catalytic Nucleophile. The active-site Proton acceptor is the H321.

This sequence belongs to the peptidase C19 family. As to quaternary structure, interacts with STAT2; the interaction is direct. Interacts with IFNAR2; indirectly via STAT2, it negatively regulates the assembly of the ternary interferon-IFNAR1-IFNAR2 complex and inhibits type I interferon signaling. Interacts with STING1. Interacts with USP20.

The enzyme catalyses Thiol-dependent hydrolysis of ester, thioester, amide, peptide and isopeptide bonds formed by the C-terminal Gly of ubiquitin (a 76-residue protein attached to proteins as an intracellular targeting signal).. Functionally, interferon-induced ISG15-specific protease that plays a crucial role for maintaining a proper balance of ISG15-conjugated proteins in cells. Regulates protein ISGylation by efficiently cleaving ISG15 conjugates linked via isopeptide bonds. Regulates T-cell activation and T-helper 17 (Th17) cell differentiation by deubiquitinating TAK1, likely to keep TAK1-TAB complexes in steady conditions. In turn, restricts activation of NF-kappa-B, NFAT, and JNK as well as expression of IL2 in T-cells after TCR activation. Acts as a molecular adapter with USP20 to promote innate antiviral response through deubiquitinating STING1. Involved also in the negative regulation of the inflammatory response triggered by type I interferon. Upon recruitment by STAT2 to the type I interferon receptor subunit IFNAR2 interferes with the assembly of the ternary interferon-IFNAR1-IFNAR2 complex and acts as a negative regulator of the type I interferon signaling pathway. In Pongo abelii (Sumatran orangutan), this protein is Ubl carboxyl-terminal hydrolase 18 (USP18).